We begin with the raw amino-acid sequence, 457 residues long: RuvB-like helicase 1 (457 aa).

73 to 80 (GGPSTGKT) lines the ATP pocket.

This sequence belongs to the RuvB family. May form heterododecamers with RVB2. Component of the SWR1 chromatin remodeling complex, the INO80 chromatin remodeling complex, and of the R2TP complex.

It is found in the nucleus. It catalyses the reaction ATP + H2O = ADP + phosphate + H(+). In terms of biological role, DNA helicase which participates in several chromatin remodeling complexes, including the SWR1 and the INO80 complexes. The SWR1 complex mediates the ATP-dependent exchange of histone H2A for the H2A variant HZT1 leading to transcriptional regulation of selected genes by chromatin remodeling. The INO80 complex remodels chromatin by shifting nucleosomes and is involved in DNA repair. Also involved in pre-rRNA processing. The polypeptide is RuvB-like helicase 1 (RVB1) (Candida glabrata (strain ATCC 2001 / BCRC 20586 / JCM 3761 / NBRC 0622 / NRRL Y-65 / CBS 138) (Yeast)).